The primary structure comprises 340 residues: Ferrochelatase (340 aa).

The Fe cation site is built by histidine 189 and glutamate 292.

It belongs to the ferrochelatase family.

Its subcellular location is the cytoplasm. It carries out the reaction heme b + 2 H(+) = protoporphyrin IX + Fe(2+). The protein operates within porphyrin-containing compound metabolism; protoheme biosynthesis; protoheme from protoporphyrin-IX: step 1/1. In terms of biological role, catalyzes the ferrous insertion into protoporphyrin IX. This is Ferrochelatase from Pseudomonas savastanoi pv. phaseolicola (strain 1448A / Race 6) (Pseudomonas syringae pv. phaseolicola (strain 1448A / Race 6)).